The sequence spans 43 residues: Bacteriocin leucocin-C (43 aa).

C9 and C14 are disulfide-bonded.

The protein resides in the secreted. Its function is as follows. Inhibits a wide spectrum of lactic acid bacteria. The sequence is that of Bacteriocin leucocin-C from Leuconostoc mesenteroides.